Consider the following 693-residue polypeptide: Polyribonucleotide nucleotidyltransferase (693 aa).

Mg(2+) contacts are provided by D489 and D495. Residues 556–615 (PQIHVMNINPAKIKDVVGRGGATVKGIVEKTGAQIDTSDSGEVKVFAKDKKSMDMAVAMI) enclose the KH domain. One can recognise an S1 motif domain in the interval 625–693 (GQVYKGKIVK…GRVKLSLVAR (69 aa)).

It belongs to the polyribonucleotide nucleotidyltransferase family. Component of the RNA degradosome, which is a multiprotein complex involved in RNA processing and mRNA degradation. The cofactor is Mg(2+).

It localises to the cytoplasm. It carries out the reaction RNA(n+1) + phosphate = RNA(n) + a ribonucleoside 5'-diphosphate. In terms of biological role, involved in mRNA degradation. Catalyzes the phosphorolysis of single-stranded polyribonucleotides processively in the 3'- to 5'-direction. The chain is Polyribonucleotide nucleotidyltransferase from Francisella tularensis subsp. novicida (strain U112).